The primary structure comprises 845 residues: Beta-mannosidase B (845 aa).

Glutamate 432 acts as the Proton donor in catalysis. N-linked (GlcNAc...) asparagine glycosylation is found at asparagine 717 and asparagine 723.

The protein belongs to the glycosyl hydrolase 2 family. Beta-mannosidase B subfamily.

It carries out the reaction Hydrolysis of terminal, non-reducing beta-D-mannose residues in beta-D-mannosides.. It participates in glycan metabolism; N-glycan degradation. Its function is as follows. Exoglycosidase that cleaves the single beta-linked mannose residue from the non-reducing end of beta-mannosidic oligosaccharides of various complexity and length. Prefers mannobiose over mannotriose and has no activity against polymeric mannan. Is also severely restricted by galactosyl substitutions at the +1 subsite. In Aspergillus clavatus (strain ATCC 1007 / CBS 513.65 / DSM 816 / NCTC 3887 / NRRL 1 / QM 1276 / 107), this protein is Beta-mannosidase B (mndB).